Reading from the N-terminus, the 96-residue chain is Conantokin-E (96 aa).

The first 24 residues, 1-24 (LLVPLVTFHLILGMGTLDHGGALT), serve as a signal peptide directing secretion. Residues 25–72 (ERRSADATALKPEPVLLQKSDARSTDDNDKDRLTQMKRILKKRGNKAR) constitute a propeptide that is removed on maturation. Residues 28–57 (SADATALKPEPVLLQKSDARSTDDNDKDRL) form a disordered region. Over residues 44–57 (SDARSTDDNDKDRL) the composition is skewed to basic and acidic residues. 4-carboxyglutamate is present on residues Glu75, Glu76, Glu82, Glu86, and Glu95. Residues Glu82 and Glu86 each coordinate a divalent metal cation. Cys83 and Cys96 are oxidised to a cystine.

Belongs to the conotoxin B superfamily. As to expression, expressed by the venom duct.

It localises to the secreted. Functionally, conantokins inhibit N-methyl-D-aspartate (NMDA) receptors. This toxin has the highest potency for the NR2B/GRIN2B subunit, followed by NR2A/GRIN2A, NR2C/GRIN2C, and NR2D/GRIN2D subunits. In Conus ermineus (Agate cone), this protein is Conantokin-E.